A 108-amino-acid polypeptide reads, in one-letter code: Protein SMALL AUXIN UP-REGULATED RNA 8 (108 aa).

The protein belongs to the ARG7 family. In terms of tissue distribution, expressed in seedlings, leaves and flowers.

It localises to the cell membrane. Its function is as follows. Provide a mechanistic link between auxin and plasma membrane H(+)-ATPases (PM H(+)-ATPases, e.g. AHA1 and AHA2), and triggers PM H(+)-ATPases activity by promoting phosphorylation of their C-terminal autoinhibitory domain as a result of PP2C-D subfamily of type 2C phosphatases inhibition, thus leading to the acidification of the apoplast and the facilitation of solutes and water uptake to drive cell expansion. Triggers plant growth probably by promoting cell elongation. Regulates branch angles and bending. The sequence is that of Protein SMALL AUXIN UP-REGULATED RNA 8 from Arabidopsis thaliana (Mouse-ear cress).